The sequence spans 625 residues: Arginine--tRNA ligase (625 aa).

Residues 117 to 127 carry the 'HIGH' region motif; the sequence is ANPIHPLHIGH.

Belongs to the class-I aminoacyl-tRNA synthetase family.

The protein resides in the cytoplasm. It catalyses the reaction tRNA(Arg) + L-arginine + ATP = L-arginyl-tRNA(Arg) + AMP + diphosphate. This Saccharolobus solfataricus (strain ATCC 35092 / DSM 1617 / JCM 11322 / P2) (Sulfolobus solfataricus) protein is Arginine--tRNA ligase.